A 344-amino-acid polypeptide reads, in one-letter code: Succinylglutamate desuccinylase (344 aa).

His63, Glu66, and His160 together coordinate Zn(2+). The active site involves Glu224.

Belongs to the AspA/AstE family. Succinylglutamate desuccinylase subfamily. Zn(2+) serves as cofactor.

The catalysed reaction is N-succinyl-L-glutamate + H2O = L-glutamate + succinate. It participates in amino-acid degradation; L-arginine degradation via AST pathway; L-glutamate and succinate from L-arginine: step 5/5. In terms of biological role, transforms N(2)-succinylglutamate into succinate and glutamate. The sequence is that of Succinylglutamate desuccinylase from Shewanella sp. (strain MR-4).